Here is a 592-residue protein sequence, read N- to C-terminus: Protein alan shepard (592 aa).

Residues 1–68 form a disordered region; the sequence is MGGPHHQHQQ…ASVAAAPPTP (68 aa). Gly residues predominate over residues 18–28; sequence VGGGNGHGGGA. Positions 36-54 are enriched in polar residues; the sequence is PNSQQLPPQMPRSQNYANG. The segment covering 55-64 has biased composition (low complexity); the sequence is SSSAASVAAA. Residues Tyr124 and Tyr140 each carry the phosphotyrosine modification. Residues 162 to 224 form a disordered region; it reads PATTTYGQRV…AQNQNQQGGE (63 aa). The span at 176 to 224 shows a compositional bias: low complexity; sequence SPSNTNSSSSSNTGSQSGTLSTSLSNTTNTNTTMGPNGTAQNQNQQGGE. RRM domains are found at residues 229–307 and 319–398; these read TNLY…IWVL and TNLY…FADG. Residues 565-592 form a disordered region; the sequence is PMTDSEQASTAASPDEAYTQYPHQAAPK.

Its function is as follows. Has a role in the perception of gravity. The sequence is that of Protein alan shepard from Drosophila mojavensis (Fruit fly).